Reading from the N-terminus, the 367-residue chain is Calcium uniporter protein, mitochondrial (367 aa).

The N-terminal 12 residues, 1–12 (MAMPRVLCRVRL), are a transit peptide targeting the mitochondrion. The Mitochondrial matrix portion of the chain corresponds to 13-232 (LIHNDFSVIS…LEEKKLELEQ (220 aa)). The disordered stretch occupies residues 61 to 80 (KQDASSSSSDSDSSDSDEDD). Positions 199–233 (REHQLQKEVELTTQLETLQQELLPLEEKKLELEQV) form a coiled coil. A helical transmembrane segment spans residues 233 to 253 (VANRRSNWMAWAGLGLMSVQF). The Mitochondrial intermembrane segment spans residues 254–262 (GILARLTWW). A helical transmembrane segment spans residues 263–284 (EYSWDIMEPVTYFVTYGTAMAA). Residues 266-276 (WDIMEPVTYFV) carry the Selectivity filter motif. Glutamate 270 is a Ca(2+) binding site. Residues 285–367 (YAYFVLTREE…KKQVEEKAKE (83 aa)) lie on the Mitochondrial matrix side of the membrane.

This sequence belongs to the MCU (TC 1.A.77) family. As to quaternary structure, homotetramer. Component of the uniplex complex, composed of MCU, EMRE, MICU1 and MICU2 in a 4:4:1:1 stoichiometry.

The protein localises to the mitochondrion inner membrane. It carries out the reaction Ca(2+)(in) = Ca(2+)(out). With respect to regulation, MCU channel activity is regulated by the heterodimer composed of MICU1 and MICU2, which act as calcium-sensors. At low calcium levels, MICU1 occludes the pore of the MCU channel, preventing mitochondrial calcium uptake. At higher calcium levels, calcium-binding to MICU1 and MICU2 induces a conformational change that weakens MCU-MICU1 interactions and moves the MICU1-MICU2 heterodimer away from the pore, allowing calcium permeation through the channel. Its function is as follows. Channel-forming and calcium-conducting subunit of the mitochondrial inner membrane calcium uniporter complex (uniplex), which mediates calcium uptake into the mitochondrial matrix. MCU channel activity is regulated by the calcium-sensor subunits of the uniplex MICU1 and MICU2. Mitochondrial calcium homeostasis plays key roles in cellular physiology and regulates ATP production, cytoplasmic calcium signals and activation of cell death pathways. The polypeptide is Calcium uniporter protein, mitochondrial (Tribolium castaneum (Red flour beetle)).